A 505-amino-acid polypeptide reads, in one-letter code: Chromosomal replication initiator protein DnaA (505 aa).

Positions 1–90 (MSVELWQQCV…RRSSAPRAAP (90 aa)) are domain I, interacts with DnaA modulators. The segment at 91-168 (NAPVSAAVAA…QVEGALKHTS (78 aa)) is domain II. The interval 169-385 (YLNRTFTFDT…GALKRVIAHS (217 aa)) is domain III, AAA+ region. ATP is bound by residues Gly-213, Gly-215, Lys-216, and Thr-217. A domain IV, binds dsDNA region spans residues 386–505 (HFMGRDITIE…YKNLLRTLTT (120 aa)).

It belongs to the DnaA family. Oligomerizes as a right-handed, spiral filament on DNA at oriC.

Its subcellular location is the cytoplasm. Functionally, plays an essential role in the initiation and regulation of chromosomal replication. ATP-DnaA binds to the origin of replication (oriC) to initiate formation of the DNA replication initiation complex once per cell cycle. Binds the DnaA box (a 9 base pair repeat at the origin) and separates the double-stranded (ds)DNA. Forms a right-handed helical filament on oriC DNA; dsDNA binds to the exterior of the filament while single-stranded (ss)DNA is stabiized in the filament's interior. The ATP-DnaA-oriC complex binds and stabilizes one strand of the AT-rich DNA unwinding element (DUE), permitting loading of DNA polymerase. After initiation quickly degrades to an ADP-DnaA complex that is not apt for DNA replication. Binds acidic phospholipids. This chain is Chromosomal replication initiator protein DnaA, found in Pseudomonas putida (strain ATCC 700007 / DSM 6899 / JCM 31910 / BCRC 17059 / LMG 24140 / F1).